Reading from the N-terminus, the 154-residue chain is Protein aau3 (154 aa).

In terms of domain architecture, HTH rrf2-type spans 2–132; the sequence is RLTKQTNYAV…QGYTIDDLVK (131 aa). Residues Cys91, Cys99, and Cys105 each coordinate [2Fe-2S] cluster.

[2Fe-2S] cluster serves as cofactor.

In terms of biological role, required for growth utilizing PHB cycle intermediates. The polypeptide is Protein aau3 (aau3) (Rhizobium meliloti (strain 1021) (Ensifer meliloti)).